The following is a 930-amino-acid chain: Progesterone receptor (930 aa).

Residues M1–A11 are compositionally biased toward basic and acidic residues. Disordered regions lie at residues M1 to A133 and L148 to A260. The segment at M1 to L165 is AF3; mediates transcriptional activation. The segment at M1–Q565 is modulating, Pro-Rich. K7 participates in a covalent cross-link: Glycyl lysine isopeptide (Lys-Gly) (interchain with G-Cter in SUMO). Residue S20 is modified to Phosphoserine. Over residues Q38–V49 the composition is skewed to polar residues. The short motif at L56–L60 is the LXXL motif 1 element. S82 carries the phosphoserine modification. An LXXL motif 2 motif is present at residues L116–L120. A Phosphoserine modification is found at S131. Residues M166–H304 form a mediates transcriptional transrepression region. A Nuclear localization signal motif is present at residues K184–R188. Low complexity predominate over residues P187–P204. Phosphoserine is present on residues S191 and S212. The residue at position 293 (S293) is a Phosphoserine; by MAPK1. A disordered region spans residues A334–D356. S344 carries the post-translational modification Phosphoserine; by MAPK. K387 participates in a covalent cross-link: Glycyl lysine isopeptide (Lys-Gly) (interchain with G-Cter in SUMO); alternate. A Glycyl lysine isopeptide (Lys-Gly) (interchain with G-Cter in ubiquitin); alternate cross-link involves residue K387. Residue S399 is modified to Phosphoserine; by CDK2. The disordered stretch occupies residues D415 to S454. Residues A420–V430 show a composition bias toward pro residues. Residues P431–S454 show a composition bias toward low complexity. An AF1; mediates transcriptional activation region spans residues S457 to R547. K532 is covalently cross-linked (Glycyl lysine isopeptide (Lys-Gly) (interchain with G-Cter in SUMO)). A DNA-binding region (nuclear receptor) is located at residues K566 to F640. NR C4-type zinc fingers lie at residues C568–C588 and C604–C628. S673 is subject to Phosphoserine. Positions Q676–I910 constitute an NR LBD domain. The tract at residues L684–K930 is AF2; mediates transcriptional activation. R763 is a binding site for progesterone.

This sequence belongs to the nuclear hormone receptor family. NR3 subfamily. As to quaternary structure, interacts with SMARD1 and UNC45A. Interacts with CUEDC2; the interaction promotes ubiquitination, decreases sumoylation, and represses transcriptional activity. Interacts with PIAS3; the interaction promotes sumoylation of PR in a hormone-dependent manner, inhibits DNA-binding, and alters nuclear export. Interacts with SP1; the interaction requires ligand-induced phosphorylation on Ser-344 by ERK1/2-MAPK. Interacts with PRMT2. Interacts with NCOA2 and NCOA1. Interacts with KLF9. Interacts with GTF2B. Phosphorylated on multiple serine sites. Several of these sites are hormone-dependent. Phosphorylation on Ser-293 is highly hormone-dependent and modulates ubiquitination and sumoylation on Lys-387. Phosphorylation on Ser-102 and Ser-344 also requires induction by hormone. Basal phosphorylation on Ser-82, Ser-191 and Ser-399 is increased in response to progesterone and can be phosphorylated in vitro by the CDK2-A1 complex. Increased levels of phosphorylation on Ser-399 also in the presence of EGF, heregulin, IGF, PMA and FBS. Phosphorylation at this site by CDK2 is ligand-independent, and increases nuclear translocation and transcriptional activity. Phosphorylation at Ser-293, but not at Ser-191, is impaired during the G(2)/M phase of the cell cycle. Phosphorylation on Ser-344 by ERK1/2 MAPK is required for interaction with SP1. Post-translationally, sumoylation is hormone-dependent and represses transcriptional activity. Sumoylation on all three sites is enhanced by PIAS3. Desumoylated by SENP1. Sumoylation on Lys-387, the main site of sumoylation, is repressed by ubiquitination on the same site, and modulated by phosphorylation at Ser-293. In terms of processing, ubiquitination is hormone-dependent and represses sumoylation on the same site. Promoted by MAPK-mediated phosphorylation on Ser-293. Ubiquitinated by UBR5, leading to its degradation: UBR5 specifically recognizes and binds ligand-bound PGR when it is not associated with coactivators (NCOAs). In presence of NCOAs, the UBR5-degron is not accessible, preventing its ubiquitination and degradation. Palmitoylated by ZDHHC7 and ZDHHC21. Palmitoylation is required for plasma membrane targeting and for rapid intracellular signaling via ERK and AKT kinases and cAMP generation.

Its subcellular location is the nucleus. The protein localises to the cytoplasm. Functionally, the steroid hormones and their receptors are involved in the regulation of eukaryotic gene expression and affect cellular proliferation and differentiation in target tissues. Transcriptional activator of several progesteron-dependent promoters in a variety of cell types. Involved in activation of SRC-dependent MAPK signaling on hormone stimulation. This Oryctolagus cuniculus (Rabbit) protein is Progesterone receptor (PGR).